Reading from the N-terminus, the 1159-residue chain is DNA-directed RNA polymerase subunit beta' (1159 aa).

Positions 398, 400, and 402 each coordinate Mg(2+). Zn(2+) is bound by residues Cys741, Cys815, Cys822, and Cys825.

This sequence belongs to the RNA polymerase beta' chain family. The RNAP catalytic core consists of 2 alpha, 1 beta, 1 beta' and 1 omega subunit. When a sigma factor is associated with the core the holoenzyme is formed, which can initiate transcription. Requires Mg(2+) as cofactor. Zn(2+) serves as cofactor.

The enzyme catalyses RNA(n) + a ribonucleoside 5'-triphosphate = RNA(n+1) + diphosphate. DNA-dependent RNA polymerase catalyzes the transcription of DNA into RNA using the four ribonucleoside triphosphates as substrates. This chain is DNA-directed RNA polymerase subunit beta', found in Porphyromonas cangingivalis.